We begin with the raw amino-acid sequence, 93 residues long: Large ribosomal subunit protein bL36m (93 aa).

The transit peptide at 1-35 directs the protein to the mitochondrion; the sequence is MFLQTLRLTMPRMFLHMKPSPITITRACTVPSLLS.

It belongs to the bacterial ribosomal protein bL36 family. In terms of assembly, component of the mitochondrial large ribosomal subunit (mt-LSU). Mature yeast 74S mitochondrial ribosomes consist of a small (37S) and a large (54S) subunit. The 37S small subunit contains a 15S ribosomal RNA (15S mt-rRNA) and 34 different proteins. The 54S large subunit contains a 21S rRNA (21S mt-rRNA) and 46 different proteins. bL36m has a zinc binding site.

Its subcellular location is the mitochondrion. Functionally, component of the mitochondrial ribosome (mitoribosome), a dedicated translation machinery responsible for the synthesis of mitochondrial genome-encoded proteins, including at least some of the essential transmembrane subunits of the mitochondrial respiratory chain. The mitoribosomes are attached to the mitochondrial inner membrane and translation products are cotranslationally integrated into the membrane. bL36m may be involved in a process influencing telomere capping. This Saccharomyces cerevisiae (strain ATCC 204508 / S288c) (Baker's yeast) protein is Large ribosomal subunit protein bL36m (RTC6).